We begin with the raw amino-acid sequence, 469 residues long: MPVTGRGPCGTCAPALRSTSKDTILTHSDQPRPLQSRANGPLTGKVRVPGDKSISHRALILGALAVGETRISGLLEGEDVLNTAKSMQALGASVERTGDFAWKVQGVGVAGFAQPKAALDFGNSGTGCRLVMGAVAGCPISAVFDGDASLRSRPMRRILDPLEKMGARVVSGGEGGRLPLTLQGARDPLPITYKTPVASAQIKSAVLLAGLAAPGTTTVIESEASRDHTELMLKHFGADITSTKEGQHGRRITLVGQPELHGANVVVPADPSSAAFPVVAALIAEGSDVVLSDVMTNPLRTGLFTTLREMGASIEESEVRGDAGEPMAQLRVRASKLRGVEVPPERAPSMIDEYLVLAVAASFAEGTTIMRGLQELRVKESDRLEATAEMLRVNGVKVEVSGDDLVVQGRGHVPGGGTVATHMDHRIAMSALVMGCASDQPVTVDDTAFIATSFPDFIPMMRSLGAEFS.

The segment at 21–45 is disordered; that stretch reads KDTILTHSDQPRPLQSRANGPLTGK. Residues Lys52, Ser53, and Arg57 each coordinate 3-phosphoshikimate. Residue Lys52 participates in phosphoenolpyruvate binding. Phosphoenolpyruvate is bound by residues Gly125 and Arg153. 4 residues coordinate 3-phosphoshikimate: Ser199, Gln201, Asp352, and Lys379. Gln201 contacts phosphoenolpyruvate. Catalysis depends on Asp352, which acts as the Proton acceptor. 2 residues coordinate phosphoenolpyruvate: Arg383 and Arg426.

The protein belongs to the EPSP synthase family. In terms of assembly, monomer.

It localises to the cytoplasm. The enzyme catalyses 3-phosphoshikimate + phosphoenolpyruvate = 5-O-(1-carboxyvinyl)-3-phosphoshikimate + phosphate. Its pathway is metabolic intermediate biosynthesis; chorismate biosynthesis; chorismate from D-erythrose 4-phosphate and phosphoenolpyruvate: step 6/7. Its function is as follows. Catalyzes the transfer of the enolpyruvyl moiety of phosphoenolpyruvate (PEP) to the 5-hydroxyl of shikimate-3-phosphate (S3P) to produce enolpyruvyl shikimate-3-phosphate and inorganic phosphate. In Bradyrhizobium diazoefficiens (strain JCM 10833 / BCRC 13528 / IAM 13628 / NBRC 14792 / USDA 110), this protein is 3-phosphoshikimate 1-carboxyvinyltransferase.